We begin with the raw amino-acid sequence, 383 residues long: Deoxyguanosinetriphosphate triphosphohydrolase-like protein (383 aa).

One can recognise an HD domain in the interval 62-198 (RLTHSLEVST…ASLADDISYI (137 aa)).

This sequence belongs to the dGTPase family. Type 2 subfamily.

This is Deoxyguanosinetriphosphate triphosphohydrolase-like protein from Rickettsia prowazekii (strain Madrid E).